Consider the following 292-residue polypeptide: Lipoyl synthase (292 aa).

[4Fe-4S] cluster-binding residues include Cys38, Cys43, Cys49, Cys64, Cys68, Cys71, and Ser277. The region spanning 50–266 (WSKGTATFLL…REIALDAGFR (217 aa)) is the Radical SAM core domain.

This sequence belongs to the radical SAM superfamily. Lipoyl synthase family. It depends on [4Fe-4S] cluster as a cofactor.

The protein resides in the cytoplasm. The enzyme catalyses [[Fe-S] cluster scaffold protein carrying a second [4Fe-4S](2+) cluster] + N(6)-octanoyl-L-lysyl-[protein] + 2 oxidized [2Fe-2S]-[ferredoxin] + 2 S-adenosyl-L-methionine + 4 H(+) = [[Fe-S] cluster scaffold protein] + N(6)-[(R)-dihydrolipoyl]-L-lysyl-[protein] + 4 Fe(3+) + 2 hydrogen sulfide + 2 5'-deoxyadenosine + 2 L-methionine + 2 reduced [2Fe-2S]-[ferredoxin]. The protein operates within protein modification; protein lipoylation via endogenous pathway; protein N(6)-(lipoyl)lysine from octanoyl-[acyl-carrier-protein]: step 2/2. Catalyzes the radical-mediated insertion of two sulfur atoms into the C-6 and C-8 positions of the octanoyl moiety bound to the lipoyl domains of lipoate-dependent enzymes, thereby converting the octanoylated domains into lipoylated derivatives. The protein is Lipoyl synthase of Chlorobaculum parvum (strain DSM 263 / NCIMB 8327) (Chlorobium vibrioforme subsp. thiosulfatophilum).